The primary structure comprises 245 residues: Small ribosomal subunit protein uS2 (245 aa).

This sequence belongs to the universal ribosomal protein uS2 family.

The chain is Small ribosomal subunit protein uS2 from Pseudomonas fluorescens (strain ATCC BAA-477 / NRRL B-23932 / Pf-5).